A 200-amino-acid chain; its full sequence is Ribosome maturation factor RimM (200 aa).

The PRC barrel domain maps to 103-181 (KEGEYYFYQL…KIVAKRLEYL (79 aa)).

It belongs to the RimM family. In terms of assembly, binds ribosomal protein uS19.

It is found in the cytoplasm. In terms of biological role, an accessory protein needed during the final step in the assembly of 30S ribosomal subunit, possibly for assembly of the head region. Essential for efficient processing of 16S rRNA. May be needed both before and after RbfA during the maturation of 16S rRNA. It has affinity for free ribosomal 30S subunits but not for 70S ribosomes. The chain is Ribosome maturation factor RimM from Kosmotoga olearia (strain ATCC BAA-1733 / DSM 21960 / TBF 19.5.1).